Consider the following 794-residue polypeptide: MRRCAWPLLRLSSRVGLALRHGGAVRLRQAAASSSSSSSGGGGLRAPDTSLFVPVPLKPVEGAAEEDVGAELTRPLDKGEVLKNLNKFYKRKEIQRLGTENGLDARLFHQAFISFRKYIMESSSVSADLHIILNDICCGAGHVDDLFPFFLRHAKQIFPMLDCMDDLRKISDLRLPPNWYPEARAIQRKIIFHAGPTNSGKTYHAIQRFLSAKSGIYCGPLKLLAHEIFQKSNAANVPCDLVTGEERVYASEDAKQASHIACTIEMCSTNTPYEVAVIDEIQMIRDPARGWAWTRALLGLCAEEIHVCGEGAAIDLVTELMYTTGEEVEVRNYKRLTPLTVLDYALESLDNLQPGDCIVCFSKNDIYSVSRQIEARGLECAVIYGSLPPGTKLEQAKKFNDPNDPCKILVATDAIGMGLNLCIKRIIFNSIVKPTVNEKGEKEIDSITTSQALQIAGRAGRFGSSFKQGEVTAMHRDDLLQLKEILSEAVPPVKAAGLHPTPEQIEMFAYHLPDATLSNLIDIFVSLSQVDGLYFVCNIDDFKFLADMIQHIPLNLRSRYVFCTAPLNRKEPFVCTTLLKFARQFSRNEPLTFDWLCRHTKWPLAPPKNIKELVHLEAVHDVFDLYLWLSYRFMDMFPDAALVRDIQKKLDDIIQIGVCNITKLIRASQSGAAPGAAEVMSEGFPLSRTKRDARTVSDHRDAKSAEPLSIALEVPGERRAKSLRTYRSATRQEDLKSHGRGSLANRLLREGLLTQEMLRQLESEWQDQHRSGRYGLASKRNDQSSSKEMGKKKK.

Residues Met1–Ala30 constitute a mitochondrion transit peptide. A Helicase ATP-binding domain is found at Glu182 to Tyr322. Gly195 to Thr202 serves as a coordination point for ATP. Positions Val341–Glu506 constitute a Helicase C-terminal domain. Disordered stretches follow at residues Glu678–Gly741 and Glu764–Lys794. Basic and acidic residues predominate over residues Thr689–Ser704.

Belongs to the helicase family. Mg(2+) serves as cofactor. Requires Mn(2+) as cofactor.

The protein resides in the nucleus. It is found in the mitochondrion matrix. Its subcellular location is the mitochondrion nucleoid. The enzyme catalyses ATP + H2O = ADP + phosphate + H(+). Major helicase player in mitochondrial RNA metabolism. Component of the mitochondrial degradosome (mtEXO) complex, that degrades 3' overhang double-stranded RNA with a 3'-to-5' directionality in an ATP-dependent manner. ATPase and ATP-dependent multisubstrate helicase, able to unwind double-stranded (ds) DNA and RNA, and RNA/DNA heteroduplexes in the 5'-to-3' direction. Plays a role in the RNA surveillance system in mitochondria; regulates the stability of mature mRNAs, the removal of aberrantly formed mRNAs and the rapid degradation of non coding processing intermediates. Also implicated in recombination and chromatin maintenance pathways. May protect cells from apoptosis. Associates with mitochondrial DNA. In Gallus gallus (Chicken), this protein is ATP-dependent RNA helicase SUPV3L1, mitochondrial (SUPV3L1).